A 540-amino-acid chain; its full sequence is MARKQNRNSKELGLVPLTDDTSHAGPPGPGRALLECDHLRSGVPGGRRRKDWSCSLLVASLAGAFGSSFLYGYNLSVVNAPTPYIKAFYNESWERRHGRPIDPDTLTLLWSVTVSIFAIGGLVGTLIVKMIGKVLGRKHTLLANNGFAISAALLMACSLQAGAFEMLIVGRFIMGIDGGVALSVLPMYLSEISPKEIRGSLGQVTAIFICIGVFTGQLLGLPELLGKESTWPYLFGVIVVPAVVQLLSLPFLPDSPRYLLLEKHNEARAVKAFQTFLGKADVSQEVEEVLAESRVQRSIRLVSVLELLRAPYVRWQVVTVIVTMACYQLCGLNAIWFYTNSIFGKAGIPPAKIPYVTLSTGGIETLAAVFSGLVIEHLGRRPLLIGGFGLMGLFFGTLTITLTLQDHAPWVPYLSIVGILAIIASFCSGPGGIPFILTGEFFQQSQRPAAFIIAGTVNWLSNFAVGLLFPFIQKSLDTYCFLVFATICITGAIYLYFVLPETKNRTYAEISQAFSKRNKAYPPEEKIDSAVTDGKINGRP.

The segment at 1 to 31 (MARKQNRNSKELGLVPLTDDTSHAGPPGPGR) is disordered. At 1–51 (MARKQNRNSKELGLVPLTDDTSHAGPPGPGRALLECDHLRSGVPGGRRRKD) the chain is on the cytoplasmic side. Serine 9 carries the post-translational modification Phosphoserine. The helical transmembrane segment at 52 to 72 (WSCSLLVASLAGAFGSSFLYG) threads the bilayer. Residues 73–107 (YNLSVVNAPTPYIKAFYNESWERRHGRPIDPDTLT) are Extracellular-facing. Asparagine 90 is a glycosylation site (N-linked (GlcNAc...) asparagine). The helical transmembrane segment at 108–128 (LLWSVTVSIFAIGGLVGTLIV) threads the bilayer. Over 129 to 140 (KMIGKVLGRKHT) the chain is Cytoplasmic. A helical membrane pass occupies residues 141-161 (LLANNGFAISAALLMACSLQA). The Extracellular segment spans residues 162-171 (GAFEMLIVGR). A helical membrane pass occupies residues 172–192 (FIMGIDGGVALSVLPMYLSEI). The Cytoplasmic portion of the chain corresponds to 193 to 200 (SPKEIRGS). Residues 201 to 221 (LGQVTAIFICIGVFTGQLLGL) form a helical membrane-spanning segment. At 222–231 (PELLGKESTW) the chain is on the extracellular side. A helical membrane pass occupies residues 232-252 (PYLFGVIVVPAVVQLLSLPFL). The Cytoplasmic segment spans residues 253 to 316 (PDSPRYLLLE…LLRAPYVRWQ (64 aa)). Residues 317–337 (VVTVIVTMACYQLCGLNAIWF) form a helical membrane-spanning segment. Residues 338–354 (YTNSIFGKAGIPPAKIP) lie on the Extracellular side of the membrane. The chain crosses the membrane as a helical span at residues 355 to 375 (YVTLSTGGIETLAAVFSGLVI). Residues 376 to 381 (EHLGRR) are Cytoplasmic-facing. The helical transmembrane segment at 382–402 (PLLIGGFGLMGLFFGTLTITL) threads the bilayer. At 403–415 (TLQDHAPWVPYLS) the chain is on the extracellular side. Residues 416–436 (IVGILAIIASFCSGPGGIPFI) form a helical membrane-spanning segment. The Cytoplasmic portion of the chain corresponds to 437 to 451 (LTGEFFQQSQRPAAF). Residues 452 to 472 (IIAGTVNWLSNFAVGLLFPFI) form a helical membrane-spanning segment. Over 473-478 (QKSLDT) the chain is Extracellular. The chain crosses the membrane as a helical span at residues 479–499 (YCFLVFATICITGAIYLYFVL). The Cytoplasmic segment spans residues 500 to 540 (PETKNRTYAEISQAFSKRNKAYPPEEKIDSAVTDGKINGRP). Position 515 is a phosphoserine (serine 515). Residues 519–540 (KAYPPEEKIDSAVTDGKINGRP) are disordered.

Belongs to the major facilitator superfamily. Sugar transporter (TC 2.A.1.1) family. Glucose transporter subfamily. In terms of tissue distribution, most strongly expressed in basolateral membranes of proximal renal tubular cells, liver and placenta. Also detected in lung, blood leukocytes, heart skeletal muscle and chondrocytes from articular cartilage. Detected in kidney membrane (at protein level). As to expression, only detected in the apical membranes of polarized renal tubular cells and placenta. Detected in kidney membrane (at protein level).

It localises to the cell membrane. Its subcellular location is the basolateral cell membrane. The protein localises to the apical cell membrane. It catalyses the reaction urate(out) = urate(in). Its activity is regulated as follows. Extracellular glucose and urate accelerate urate efflux. Intracellular urate, glucose and fructose accelerate urate influx. No effect of extracellular urate, glucose or fructose on urate efflux. Intracellular urate and fructose slightly accelerate urate influx. High-capacity urate transporter, which may play a role in the urate reabsorption by proximal tubules. May have a residual high-affinity, low-capacity glucose and fructose transporter activity. Transports urate at rates 45- to 60-fold faster than glucose. Does not transport galactose. May mediate small uptake of adenine but not of other nucleobases. The protein is Solute carrier family 2, facilitated glucose transporter member 9 of Homo sapiens (Human).